The sequence spans 557 residues: Arginine--tRNA ligase (557 aa).

The 'HIGH' region motif lies at 132–142 (ANPTGDLHLGH).

This sequence belongs to the class-I aminoacyl-tRNA synthetase family. In terms of assembly, monomer.

It localises to the cytoplasm. It carries out the reaction tRNA(Arg) + L-arginine + ATP = L-arginyl-tRNA(Arg) + AMP + diphosphate. The polypeptide is Arginine--tRNA ligase (Geobacillus kaustophilus (strain HTA426)).